The following is a 190-amino-acid chain: CASP-like protein 1E2 (190 aa).

A compositionally biased stretch (low complexity) spans 1-12 (MENEGKNNMNGM). Residues 1–24 (MENEGKNNMNGMEMEKGKRESRSR) are disordered. Residues 1 to 28 (MENEGKNNMNGMEMEKGKRESRSRKGVE) lie on the Cytoplasmic side of the membrane. The span at 13–24 (EMEKGKRESRSR) shows a compositional bias: basic and acidic residues. The chain crosses the membrane as a helical span at residues 29 to 49 (LTMRVLALVLTMAAATVLGVA). The Extracellular segment spans residues 50–83 (KQTKVVSIKLIPALPPLDITTTAKASYLSAFVYN). Residues 84–104 (ISANAIACGYTAISIAILMIS) form a helical membrane-spanning segment. At 105–111 (RGRRSKK) the chain is on the cytoplasmic side. Residues 112–132 (LLMAVLLGDLVMVALLFSGTG) traverse the membrane as a helical segment. Residues 133 to 163 (AASAIGLMGLQGNKHVMWNKVCGVFGKFCHR) are Extracellular-facing. A helical membrane pass occupies residues 164 to 184 (AAPSLPLTFLAAVVFMFLVVL). Residues 185-190 (DAIKLP) lie on the Cytoplasmic side of the membrane.

The protein belongs to the Casparian strip membrane proteins (CASP) family. As to quaternary structure, homodimer and heterodimers.

It localises to the cell membrane. The sequence is that of CASP-like protein 1E2 from Arabidopsis lyrata subsp. lyrata (Lyre-leaved rock-cress).